Here is a 186-residue protein sequence, read N- to C-terminus: Acireductone dioxygenase (186 aa).

Fe(2+) contacts are provided by H89, H91, E95, and H134. The Ni(2+) site is built by H89, H91, E95, and H134.

This sequence belongs to the acireductone dioxygenase (ARD) family. Fe(2+) is required as a cofactor. The cofactor is Ni(2+).

Its subcellular location is the cytoplasm. It is found in the nucleus. It carries out the reaction 1,2-dihydroxy-5-(methylsulfanyl)pent-1-en-3-one + O2 = 4-methylsulfanyl-2-oxobutanoate + formate + 2 H(+). It catalyses the reaction 1,2-dihydroxy-5-(methylsulfanyl)pent-1-en-3-one + O2 = 3-(methylsulfanyl)propanoate + CO + formate + 2 H(+). The protein operates within amino-acid biosynthesis; L-methionine biosynthesis via salvage pathway; L-methionine from S-methyl-5-thio-alpha-D-ribose 1-phosphate: step 5/6. In terms of biological role, catalyzes 2 different reactions between oxygen and the acireductone 1,2-dihydroxy-3-keto-5-methylthiopentene (DHK-MTPene) depending upon the metal bound in the active site. Fe-containing acireductone dioxygenase (Fe-ARD) produces formate and 2-keto-4-methylthiobutyrate (KMTB), the alpha-ketoacid precursor of methionine in the methionine recycle pathway. Ni-containing acireductone dioxygenase (Ni-ARD) produces methylthiopropionate, carbon monoxide and formate, and does not lie on the methionine recycle pathway. In Drosophila melanogaster (Fruit fly), this protein is Acireductone dioxygenase.